A 418-amino-acid chain; its full sequence is Sterigmatocystin 8-O-methyltransferase (418 aa).

The propeptide occupies 1–41 (MALPSKAALVGLANTLSEQVKRYLATAGETKSPEDHKLCIE). A substrate-binding site is contributed by 170–176 (MRSGASF). The tract at residues 206-225 (LFDYYSTVDEVRGRRFDLGM) is substrate binding. Residues 254–255 (GG), Asp277, 297–298 (DI), and Arg313 contribute to the S-adenosyl-L-methionine site. His317 acts as the Proton acceptor in catalysis.

It belongs to the class I-like SAM-binding methyltransferase superfamily. Cation-independent O-methyltransferase family. COMT subfamily.

It localises to the cytoplasm. It is found in the vacuole. It carries out the reaction sterigmatocystin + S-adenosyl-L-methionine = 8-O-methylsterigmatocystin + S-adenosyl-L-homocysteine + H(+). The enzyme catalyses dihydrosterigmatocystin + S-adenosyl-L-methionine = 8-O-methyldihydrosterigmatocystin + S-adenosyl-L-homocysteine + H(+). Its pathway is mycotoxin biosynthesis; aflatoxin biosynthesis. In terms of biological role, sterigmatocystin 8-O-methyltransferase; part of the gene cluster that mediates the biosynthesis of aflatoxins, a group of polyketide-derived furanocoumarins, and part of the most toxic and carcinogenic compounds among the known mycotoxins. The four major aflatoxins produced by A.parasiticus are aflatoxin B1 (AFB1), aflatoxin B2 (AFB2), aflatoxin G1 (AFG1) and aflatoxin G2 (AFG2). Within the aflatoxin pathway, the O-methyltransferase aflP uses both sterigmatocystin (ST) and dihydrosterigmatocystin (DHST) as substrates to yield O-methylsterigmatocystin (OMST) and dihydro-O-methylsterigmatocystin (DHOMST), respectively. The biosynthesis of aflatoxins begins with the norsolorinic acid synthase aflC that combines a hexanoyl starter unit produced by the fatty acid synthase aflA/aflB and 7 malonyl-CoA extender units to synthesize the precursor NOR. The second step is the conversion of NOR to averantin and requires the norsolorinic acid ketoreductase aflD, which catalyzes the dehydration of norsolorinic acid to form (1'S)-averantin. The norsolorinic acid reductases aflE and aflF may also play a role in the conversion of NOR to AVN. The cytochrome P450 monooxygenase aflG then catalyzes the hydroxylation of AVN to 5'hydroxyaverantin (HAVN). The next step is performed by the 5'-hydroxyaverantin dehydrogenase aflH that transforms HAVN to 5'-oxoaverantin (OAVN) which is further converted to averufin (AVF) by aflK that plays a dual role in the pathway, as a 5'-oxoaverantin cyclase that mediates conversion of 5'-oxoaverantin, as well as a versicolorin B synthase in a later step in the pathway. The averufin oxidase aflI catalyzes the conversion of AVF to versiconal hemiacetal acetate (VHA). VHA is then the substrate for the versiconal hemiacetal acetate esterase aflJ to yield versiconal (VAL). Versicolorin B synthase aflK then converts VAL to versicolorin B (VERB) by closing the bisfuran ring of aflatoxin which is required for DNA-binding, thus giving to aflatoxin its activity as a mutagen. Then, the activity of the versicolorin B desaturase aflL leads to versicolorin A (VERA). A branch point starts from VERB since it can also be converted to dihydrodemethylsterigmatocystin (DMDHST), probably also by aflL, VERA being a precursor for aflatoxins B1 and G1, and DMDHST for aflatoxins B2 and G2. Next, the versicolorin reductase aflM and the cytochrome P450 monooxygenase aflN are involved in conversion of VERA to demethylsterigmatocystin (DMST). AflX and aflY seem also involved in this step, through probable aflX-mediated epoxide ring-opening step following versicolorin A oxidation and aflY-mediated Baeyer-Villiger oxidation required for the formation of the xanthone ring. The methyltransferase aflO then leads to the modification of DMST to sterigmatocystin (ST), and of DMDHST to dihydrosterigmatocystin (DHST). Both ST and DHST are then substrates of the O-methyltransferase aflP to yield O-methylsterigmatocystin (OMST) and dihydro-O-methylsterigmatocystin (DHOMST), respectively. Finally OMST is converted to aflatoxins B1 and G1, and DHOMST to aflatoxins B2 and G2, via the action of several enzymes including O-methylsterigmatocystin oxidoreductase aflQ, the cytochrome P450 monooxygenase aflU, but also the NADH-dependent flavin oxidoreductase nadA which is specifically required for the synthesis of AFG1. The chain is Sterigmatocystin 8-O-methyltransferase from Aspergillus parasiticus (strain ATCC 56775 / NRRL 5862 / SRRC 143 / SU-1).